Here is a 615-residue protein sequence, read N- to C-terminus: 1-deoxy-D-xylulose-5-phosphate synthase (615 aa).

Thiamine diphosphate contacts are provided by residues His-72 and 111 to 113 (GHS). Residue Asp-142 coordinates Mg(2+). Thiamine diphosphate is bound by residues 143-144 (GA), Asn-171, Tyr-278, and Glu-360. Residue Asn-171 coordinates Mg(2+).

It belongs to the transketolase family. DXPS subfamily. In terms of assembly, homodimer. Mg(2+) serves as cofactor. Requires thiamine diphosphate as cofactor.

The enzyme catalyses D-glyceraldehyde 3-phosphate + pyruvate + H(+) = 1-deoxy-D-xylulose 5-phosphate + CO2. It participates in metabolic intermediate biosynthesis; 1-deoxy-D-xylulose 5-phosphate biosynthesis; 1-deoxy-D-xylulose 5-phosphate from D-glyceraldehyde 3-phosphate and pyruvate: step 1/1. Functionally, catalyzes the acyloin condensation reaction between C atoms 2 and 3 of pyruvate and glyceraldehyde 3-phosphate to yield 1-deoxy-D-xylulose-5-phosphate (DXP). The protein is 1-deoxy-D-xylulose-5-phosphate synthase of Campylobacter jejuni subsp. jejuni serotype O:2 (strain ATCC 700819 / NCTC 11168).